The chain runs to 252 residues: Probable transcriptional regulatory protein Fnod_1106 (252 aa).

Belongs to the TACO1 family.

Its subcellular location is the cytoplasm. The protein is Probable transcriptional regulatory protein Fnod_1106 of Fervidobacterium nodosum (strain ATCC 35602 / DSM 5306 / Rt17-B1).